A 455-amino-acid chain; its full sequence is Mitochondrial inner membrane magnesium transporter LPE10 (455 aa).

A mitochondrion-targeting transit peptide spans 1-56 (MHIKISTDFAIQNLHCTTMIRPLLRLCGQRTAATPFVSFFRPPKKPLSGISFARHY). Transmembrane regions (helical) follow at residues 365 to 385 (FQIG…YGMN) and 396 to 416 (GFLG…AHFL). The short motif at 382–385 (YGMN) is the YGMN element. A compositionally biased stretch (basic and acidic residues) spans 433–444 (KAMKKKDTVAEK). The tract at residues 433 to 455 (KAMKKKDTVAEKRRNHLRNWLTK) is disordered.

This sequence belongs to the CorA metal ion transporter (MIT) (TC 1.A.35) family. In terms of assembly, forms homooligomers. Interacts with MRS2.

It is found in the mitochondrion inner membrane. In terms of biological role, mitochondrial inner membrane magnesium transporter required for mitochondrial magnesium homeostasis. Modulates the conductance of the MRS2 channel. Involved in the splicing of mRNA group II introns in mitochondria by affecting mitochondrial magnesium concentrations, which are critical for group II intron splicing. The protein is Mitochondrial inner membrane magnesium transporter LPE10 (LPE10) of Yarrowia lipolytica (strain CLIB 122 / E 150) (Yeast).